Consider the following 858-residue polypeptide: MAAATVGVLLRLLLLPVVVVVSLLVGASRAANVTYDHRAVVIDGVRRVLVSGSIHYPRSTPDMWPGLIQKSKDGGLDVIETYVFWDIHEAVRGQYDFEGRKDLVRFVKAVADAGLYVHLRIGPYVCAEWNYGGFPVWLHFVPGIKFRTDNEAFKAEMQRFTEKVVDTMKGAGLYASQGGPIILSQIENEYGNIDSAYGAAGKAYMRWAAGMAVSLDTGVPWVMCQQSDAPDPLINTCNGFYCDQFTPNSKSKPKMWTENWSGWFLSFGGAVPYRPAEDLAFAVARFYQRGGTFQNYYMYHGGTNFGRSTGGPFIATSYDYDAPIDEYGMVRQPKWGHLRDVHKAIKLCEPALIAAEPSYSSLGQNTEATVYQTADNSICAAFLANVDAQSDKTVKFNGNTYKLPAWSVSILPDCKNVVLNTAQINSQVTTSEMRSLGSSIQDTDDSLITPELATAGWSYAIEPVGITKENALTKPGLMEQINTTADASDFLWYSTSIVVKGDEPYLNGSQSNLLVNSLGHVLQIYINGKLAGSAKGSASSSLISLQTPVTLVPGKNKIDLLSTTVGLSNYGAFFDLVGAGVTGPVKLSGPNGALNLSSTDWTYQIGLRGEDLHLYNPSEASPEWVSDNAYPTNQPLIWYKTKFTAPAGDDPVAIDFTGMGKGEAWVNGQSIGRYWPTNLAPQSGCVNSCNYRGAYSSNKCLKKCGQPSQTLYHVPRSFLQPGSNDLVLFEQFGGDPSMISFTTRQTSSICAHVSEMHPAQIDSWISPQQTSQTQGPALRLECPREGQVISNIKFASFGTPSGTCGNYNHGECSSSQALAVVQEACVGMTNCSVPVSSNNFGDPCSGVTKSLVVEAACS.

An N-terminal signal peptide occupies residues methionine 1–alanine 30. The N-linked (GlcNAc...) asparagine glycan is linked to asparagine 32. The active-site Proton donor is glutamate 189. Glutamate 258 acts as the Nucleophile in catalysis. Residues asparagine 259, asparagine 482, asparagine 507, asparagine 595, and asparagine 830 are each glycosylated (N-linked (GlcNAc...) asparagine). Positions glutamine 772–serine 858 constitute an SUEL-type lectin domain.

This sequence belongs to the glycosyl hydrolase 35 family.

It is found in the secreted. The protein localises to the extracellular space. Its subcellular location is the apoplast. It catalyses the reaction Hydrolysis of terminal non-reducing beta-D-galactose residues in beta-D-galactosides.. Its function is as follows. Releases galactose by hydrolysis of plant cell wall galactose-containing polysaccharides such as galacto-xyloglucan, pectic galactan and galactan (in vitro). The sequence is that of Beta-galactosidase 6 from Oryza sativa subsp. japonica (Rice).